We begin with the raw amino-acid sequence, 455 residues long: Bifunctional protein GlmU (455 aa).

The segment at 1 to 226 (MSLDIVILAA…AMEVQGANDR (226 aa)) is pyrophosphorylase. UDP-N-acetyl-alpha-D-glucosamine contacts are provided by residues 8–11 (LAAG), K22, Q73, 78–79 (GT), 99–101 (YGD), G136, E151, N166, and N224. Mg(2+) is bound at residue D101. A Mg(2+)-binding site is contributed by N224. The linker stretch occupies residues 227–247 (KQLSELERHYQLREARRLMAA). Residues 248 to 455 (GVTLRDPSRF…WKRPVKITKD (208 aa)) are N-acetyltransferase. Positions 330 and 348 each coordinate UDP-N-acetyl-alpha-D-glucosamine. H360 serves as the catalytic Proton acceptor. 2 residues coordinate UDP-N-acetyl-alpha-D-glucosamine: Y363 and N374. Residues A377, 383–384 (NY), S402, A420, and R437 contribute to the acetyl-CoA site.

The protein in the N-terminal section; belongs to the N-acetylglucosamine-1-phosphate uridyltransferase family. In the C-terminal section; belongs to the transferase hexapeptide repeat family. Homotrimer. Mg(2+) is required as a cofactor.

It localises to the cytoplasm. The catalysed reaction is alpha-D-glucosamine 1-phosphate + acetyl-CoA = N-acetyl-alpha-D-glucosamine 1-phosphate + CoA + H(+). It catalyses the reaction N-acetyl-alpha-D-glucosamine 1-phosphate + UTP + H(+) = UDP-N-acetyl-alpha-D-glucosamine + diphosphate. It participates in nucleotide-sugar biosynthesis; UDP-N-acetyl-alpha-D-glucosamine biosynthesis; N-acetyl-alpha-D-glucosamine 1-phosphate from alpha-D-glucosamine 6-phosphate (route II): step 2/2. The protein operates within nucleotide-sugar biosynthesis; UDP-N-acetyl-alpha-D-glucosamine biosynthesis; UDP-N-acetyl-alpha-D-glucosamine from N-acetyl-alpha-D-glucosamine 1-phosphate: step 1/1. Its pathway is bacterial outer membrane biogenesis; LPS lipid A biosynthesis. Functionally, catalyzes the last two sequential reactions in the de novo biosynthetic pathway for UDP-N-acetylglucosamine (UDP-GlcNAc). The C-terminal domain catalyzes the transfer of acetyl group from acetyl coenzyme A to glucosamine-1-phosphate (GlcN-1-P) to produce N-acetylglucosamine-1-phosphate (GlcNAc-1-P), which is converted into UDP-GlcNAc by the transfer of uridine 5-monophosphate (from uridine 5-triphosphate), a reaction catalyzed by the N-terminal domain. The chain is Bifunctional protein GlmU from Pseudomonas syringae pv. tomato (strain ATCC BAA-871 / DC3000).